We begin with the raw amino-acid sequence, 414 residues long: Protein ABHD18 (414 aa).

The signal sequence occupies residues 1-24 (MGVSKLDILYRRLLLTKLFIRGWG). N-linked (GlcNAc...) asparagine glycans are attached at residues Asn-282 and Asn-307.

Belongs to the AB hydrolase superfamily.

It is found in the secreted. The protein is Protein ABHD18 of Homo sapiens (Human).